The sequence spans 205 residues: Ribosomal RNA small subunit methyltransferase G (205 aa).

S-adenosyl-L-methionine contacts are provided by residues Gly-66, Phe-71, 119 to 120 (IE), and Arg-135.

The protein belongs to the methyltransferase superfamily. RNA methyltransferase RsmG family.

It is found in the cytoplasm. The enzyme catalyses guanosine(527) in 16S rRNA + S-adenosyl-L-methionine = N(7)-methylguanosine(527) in 16S rRNA + S-adenosyl-L-homocysteine. Functionally, specifically methylates the N7 position of guanine in position 527 of 16S rRNA. The polypeptide is Ribosomal RNA small subunit methyltransferase G (Rhizobium rhizogenes (strain K84 / ATCC BAA-868) (Agrobacterium radiobacter)).